A 219-amino-acid polypeptide reads, in one-letter code: uncharacterized protein (219 aa).

The next 2 helical transmembrane spans lie at 81–101 and 168–188; these read VVKW…NYLI and PIME…TALV.

The protein localises to the membrane. This is an uncharacterized protein from Saccharomyces cerevisiae (strain ATCC 204508 / S288c) (Baker's yeast).